We begin with the raw amino-acid sequence, 1433 residues long: Gag-Pol polyprotein (1433 aa).

The N-myristoyl glycine; by host moiety is linked to residue G2. The tract at residues 7–31 (VLTGGKLDAWEKIRLRPGGRKSYKI) is interaction with Gp41. The interaction with host CALM1 stretch occupies residues 8–43 (LTGGKLDAWEKIRLRPGGRKSYKIKHLVWASRELER). An interaction with host AP3D1 region spans residues 12-19 (KLDAWEKI). The interval 14–33 (DAWEKIRLRPGGRKSYKIKH) is interaction with membrane phosphatidylinositol 4,5-bisphosphate and RNA. The Nuclear export signal signature appears at 16–22 (WEKIRLR). Positions 26 to 32 (RKSYKIK) match the Nuclear localization signal motif. The tract at residues 73-77 (EEIKS) is interaction with membrane phosphatidylinositol 4,5-bisphosphate. Y132 is subject to Phosphotyrosine; by host. Residues 189 to 227 (NTVGGHQAAMQMLKDTINEEAAEWDRMHPQQAGPFPPGQ) form an interaction with human PPIA/CYPA and NUP153 region. The interval 277-363 (YSPVSILDIR…GGPSHKARVL (87 aa)) is dimerization/Multimerization of capsid protein p24. CCHC-type zinc fingers lie at residues 391 to 408 (IKCFNCGKEGHLARNCRA) and 412 to 429 (KGCWKCGKEGHQMKDCTE). Residues 445-455 (EAREFSSEQDR) are compositionally biased toward basic and acidic residues. Residues 445-481 (EAREFSSEQDRTNSPTCRKPRVRRGDSPLPEAGDEGK) form a disordered region. Residues 487–491 (PQITL) form a dimerization of protease region. The Peptidase A2 domain maps to 506–575 (IEALLDTGAD…TPINIIGRNM (70 aa)). The For protease activity; shared with dimeric partner role is filled by D511. Dimerization of protease regions lie at residues 535–541 (GIGGFIK) and 574–586 (NMLTQIGCTLNFP). The region spanning 629–819 (EGKISKIGPE…PPFLWMGYEL (191 aa)) is the Reverse transcriptase domain. Positions 695, 770, and 771 each coordinate Mg(2+). Residues 812–820 (FLWMGYELH) form an RT 'primer grip' region. Residues 983–999 (WEIWWTDYWQATWIPEW) carry the Tryptophan repeat motif motif. In terms of domain architecture, RNase H type-1 spans 1019–1142 (IPGAETYYVD…VDKLVSSGIR (124 aa)). Residues D1028, E1063, D1083, and D1134 each coordinate Mg(2+). The Integrase-type zinc finger occupies 1148–1189 (DGIDKAQEEHERYHNNWRAMASDFNLPPIVAKEIVASCDKCQ). The Zn(2+) site is built by H1157, H1161, C1185, and C1188. The Integrase catalytic domain occupies 1199–1349 (VDCSPGIWQL…SAGERIIDII (151 aa)). Mg(2+)-binding residues include D1209, D1261, and E1297. The segment at residues 1368–1415 (FRVYYRDSRDPVWKGPAKLLWKGEGAVVIQDNNEIKVVPRRKAKIIRD) is a DNA-binding region (integrase-type).

Homotrimer; further assembles as hexamers of trimers. Interacts with gp41 (via C-terminus). Interacts with host CALM1; this interaction induces a conformational change in the Matrix protein, triggering exposure of the myristate group. Interacts with host AP3D1; this interaction allows the polyprotein trafficking to multivesicular bodies during virus assembly. Part of the pre-integration complex (PIC) which is composed of viral genome, matrix protein, Vpr and integrase. In terms of assembly, homodimer; the homodimer further multimerizes as homohexamers or homopentamers. Interacts with human PPIA/CYPA; This interaction stabilizes the capsid. Interacts with human NUP153. Interacts with host PDZD8; this interaction stabilizes the capsid. Interacts with monkey TRIM5; this interaction destabilizes the capsid. As to quaternary structure, homodimer, whose active site consists of two apposed aspartic acid residues. Heterodimer of p66 RT and p51 RT (RT p66/p51). Heterodimerization of RT is essential for DNA polymerase activity. The overall folding of the subdomains is similar in p66 RT and p51 RT but the spatial arrangements of the subdomains are dramatically different. In terms of assembly, homotetramer; may further associate as a homohexadecamer. Part of the pre-integration complex (PIC) which is composed of viral genome, matrix protein, Vpr and integrase. Interacts with human SMARCB1/INI1 and human PSIP1/LEDGF isoform 1. Interacts with human KPNA3; this interaction might play a role in nuclear import of the pre-integration complex. Interacts with human NUP153; this interaction might play a role in nuclear import of the pre-integration complex. Mg(2+) serves as cofactor. Specific enzymatic cleavages by the viral protease yield mature proteins. The protease is released by autocatalytic cleavage. The polyprotein is cleaved during and after budding, this process is termed maturation. Proteolytic cleavage of p66 RT removes the RNase H domain to yield the p51 RT subunit. Nucleocapsid protein p7 might be further cleaved after virus entry. Post-translationally, tyrosine phosphorylated presumably in the virion by a host kinase. Phosphorylation is apparently not a major regulator of membrane association. In terms of processing, phosphorylated possibly by host MAPK1; this phosphorylation is necessary for Pin1-mediated virion uncoating. Methylated by host PRMT6, impairing its function by reducing RNA annealing and the initiation of reverse transcription.

It localises to the host cell membrane. The protein localises to the host endosome. The protein resides in the host multivesicular body. It is found in the virion membrane. Its subcellular location is the host nucleus. It localises to the host cytoplasm. The protein localises to the virion. The catalysed reaction is Specific for a P1 residue that is hydrophobic, and P1' variable, but often Pro.. It carries out the reaction Endohydrolysis of RNA in RNA/DNA hybrids. Three different cleavage modes: 1. sequence-specific internal cleavage of RNA. Human immunodeficiency virus type 1 and Moloney murine leukemia virus enzymes prefer to cleave the RNA strand one nucleotide away from the RNA-DNA junction. 2. RNA 5'-end directed cleavage 13-19 nucleotides from the RNA end. 3. DNA 3'-end directed cleavage 15-20 nucleotides away from the primer terminus.. It catalyses the reaction 3'-end directed exonucleolytic cleavage of viral RNA-DNA hybrid.. The enzyme catalyses DNA(n) + a 2'-deoxyribonucleoside 5'-triphosphate = DNA(n+1) + diphosphate. Its activity is regulated as follows. Protease: The viral protease is inhibited by many synthetic protease inhibitors (PIs), such as amprenavir, atazanavir, indinavir, loprinavir, nelfinavir, ritonavir and saquinavir. Use of protease inhibitors in tritherapy regimens permit more ambitious therapeutic strategies. Reverse transcriptase/ribonuclease H: RT can be inhibited either by nucleoside RT inhibitors (NRTIs) or by non nucleoside RT inhibitors (NNRTIs). NRTIs act as chain terminators, whereas NNRTIs inhibit DNA polymerization by binding a small hydrophobic pocket near the RT active site and inducing an allosteric change in this region. Classical NRTIs are abacavir, adefovir (PMEA), didanosine (ddI), lamivudine (3TC), stavudine (d4T), tenofovir (PMPA), zalcitabine (ddC), and zidovudine (AZT). Classical NNRTIs are atevirdine (BHAP U-87201E), delavirdine, efavirenz (DMP-266), emivirine (I-EBU), and nevirapine (BI-RG-587). The tritherapies used as a basic effective treatment of AIDS associate two NRTIs and one NNRTI. In terms of biological role, mediates, with Gag polyprotein, the essential events in virion assembly, including binding the plasma membrane, making the protein-protein interactions necessary to create spherical particles, recruiting the viral Env proteins, and packaging the genomic RNA via direct interactions with the RNA packaging sequence (Psi). Gag-Pol polyprotein may regulate its own translation, by the binding genomic RNA in the 5'-UTR. At low concentration, the polyprotein would promote translation, whereas at high concentration, the polyprotein would encapsidate genomic RNA and then shut off translation. Targets the polyprotein to the plasma membrane via a multipartite membrane-binding signal, that includes its myristoylated N-terminus. Matrix protein is part of the pre-integration complex. Implicated in the release from host cell mediated by Vpu. Binds to RNA. Functionally, forms the conical core that encapsulates the genomic RNA-nucleocapsid complex in the virion. Most core are conical, with only 7% tubular. The core is constituted by capsid protein hexamer subunits. The core is disassembled soon after virion entry. Host restriction factors such as TRIM5-alpha or TRIMCyp bind retroviral capsids and cause premature capsid disassembly, leading to blocks in reverse transcription. Capsid restriction by TRIM5 is one of the factors which restricts HIV-1 to the human species. Host PIN1 apparently facilitates the virion uncoating. On the other hand, interactions with PDZD8 or CYPA stabilize the capsid. Its function is as follows. Encapsulates and protects viral dimeric unspliced genomic RNA (gRNA). Binds these RNAs through its zinc fingers. Acts as a nucleic acid chaperone which is involved in rearangement of nucleic acid secondary structure during gRNA retrotranscription. Also facilitates template switch leading to recombination. As part of the polyprotein, participates in gRNA dimerization, packaging, tRNA incorporation and virion assembly. In terms of biological role, aspartyl protease that mediates proteolytic cleavages of Gag and Gag-Pol polyproteins during or shortly after the release of the virion from the plasma membrane. Cleavages take place as an ordered, step-wise cascade to yield mature proteins. This process is called maturation. Displays maximal activity during the budding process just prior to particle release from the cell. Also cleaves Nef and Vif, probably concomitantly with viral structural proteins on maturation of virus particles. Hydrolyzes host EIF4GI and PABP1 in order to shut off the capped cellular mRNA translation. The resulting inhibition of cellular protein synthesis serves to ensure maximal viral gene expression and to evade host immune response. Also mediates cleavage of host YTHDF3. Mediates cleavage of host CARD8, thereby activating the CARD8 inflammasome, leading to the clearance of latent HIV-1 in patient CD4(+) T-cells after viral reactivation; in contrast, HIV-1 can evade CARD8-sensing when its protease remains inactive in infected cells prior to viral budding. Multifunctional enzyme that converts the viral RNA genome into dsDNA in the cytoplasm, shortly after virus entry into the cell. This enzyme displays a DNA polymerase activity that can copy either DNA or RNA templates, and a ribonuclease H (RNase H) activity that cleaves the RNA strand of RNA-DNA heteroduplexes in a partially processive 3' to 5' endonucleasic mode. Conversion of viral genomic RNA into dsDNA requires many steps. A tRNA(3)-Lys binds to the primer-binding site (PBS) situated at the 5'-end of the viral RNA. RT uses the 3' end of the tRNA primer to perform a short round of RNA-dependent minus-strand DNA synthesis. The reading proceeds through the U5 region and ends after the repeated (R) region which is present at both ends of viral RNA. The portion of the RNA-DNA heteroduplex is digested by the RNase H, resulting in a ssDNA product attached to the tRNA primer. This ssDNA/tRNA hybridizes with the identical R region situated at the 3' end of viral RNA. This template exchange, known as minus-strand DNA strong stop transfer, can be either intra- or intermolecular. RT uses the 3' end of this newly synthesized short ssDNA to perform the RNA-dependent minus-strand DNA synthesis of the whole template. RNase H digests the RNA template except for two polypurine tracts (PPTs) situated at the 5'-end and near the center of the genome. It is not clear if both polymerase and RNase H activities are simultaneous. RNase H probably can proceed both in a polymerase-dependent (RNA cut into small fragments by the same RT performing DNA synthesis) and a polymerase-independent mode (cleavage of remaining RNA fragments by free RTs). Secondly, RT performs DNA-directed plus-strand DNA synthesis using the PPTs that have not been removed by RNase H as primers. PPTs and tRNA primers are then removed by RNase H. The 3' and 5' ssDNA PBS regions hybridize to form a circular dsDNA intermediate. Strand displacement synthesis by RT to the PBS and PPT ends produces a blunt ended, linear dsDNA copy of the viral genome that includes long terminal repeats (LTRs) at both ends. Functionally, catalyzes viral DNA integration into the host chromosome, by performing a series of DNA cutting and joining reactions. This enzyme activity takes place after virion entry into a cell and reverse transcription of the RNA genome in dsDNA. The first step in the integration process is 3' processing. This step requires a complex comprising the viral genome, matrix protein, Vpr and integrase. This complex is called the pre-integration complex (PIC). The integrase protein removes 2 nucleotides from each 3' end of the viral DNA, leaving recessed CA OH's at the 3' ends. In the second step, the PIC enters cell nucleus. This process is mediated through integrase and Vpr proteins, and allows the virus to infect a non dividing cell. This ability to enter the nucleus is specific of lentiviruses, other retroviruses cannot and rely on cell division to access cell chromosomes. In the third step, termed strand transfer, the integrase protein joins the previously processed 3' ends to the 5' ends of strands of target cellular DNA at the site of integration. The 5'-ends are produced by integrase-catalyzed staggered cuts, 5 bp apart. A Y-shaped, gapped, recombination intermediate results, with the 5'-ends of the viral DNA strands and the 3' ends of target DNA strands remaining unjoined, flanking a gap of 5 bp. The last step is viral DNA integration into host chromosome. This involves host DNA repair synthesis in which the 5 bp gaps between the unjoined strands are filled in and then ligated. Since this process occurs at both cuts flanking the HIV genome, a 5 bp duplication of host DNA is produced at the ends of HIV-1 integration. Alternatively, Integrase may catalyze the excision of viral DNA just after strand transfer, this is termed disintegration. This chain is Gag-Pol polyprotein (gag-pol), found in Human immunodeficiency virus type 1 group M subtype G (isolate SE6165) (HIV-1).